Reading from the N-terminus, the 660-residue chain is Iron(3+)-hydroxamate import system permease protein FhuB (660 aa).

18 consecutive transmembrane segments (helical) span residues 5 to 25 (IALF…ALTW), 62 to 82 (LAIS…FQQV), 93 to 113 (LGVA…AIPG), 118 to 138 (QFAA…VAWG), 147 to 167 (ILAG…LVIF), 197 to 217 (QLLG…LMGL), 240 to 260 (AIVI…IGLF), 277 to 297 (LMLA…IILW), 303 to 323 (MEVS…LWLL), 348 to 368 (LAFA…ALSF), 391 to 411 (WPRI…GCII), 424 to 444 (VLGI…LVPG), 447 to 467 (FGWL…IIMI), 479 to 499 (MLLA…MLQA), 528 to 548 (GIVM…LTIL), 567 to 587 (IALL…IGPL), 607 to 627 (MPHI…ADWC), and 635 to 655 (FQIP…IYLL).

Belongs to the binding-protein-dependent transport system permease family. FecCD subfamily. In terms of assembly, the complex is composed of two ATP-binding proteins (FhuC), a transmembrane protein (FhuB) and a solute-binding protein (FhuD). FhuB interacts with FhuC. FhuB interacts with FhuD. FhuB binds substrate-loaded FhuD more strongly than FhuD alone.

The protein localises to the cell inner membrane. Its function is as follows. Part of the ABC transporter complex FhuCDB involved in iron(3+)-hydroxamate import. Responsible for the translocation of the substrate across the membrane. The sequence is that of Iron(3+)-hydroxamate import system permease protein FhuB (fhuB) from Escherichia coli (strain K12).